We begin with the raw amino-acid sequence, 340 residues long: Cytochrome c peroxidase, mitochondrial (340 aa).

The transit peptide at 1 to 17 (MRSFRAVRNFSTTAKRL) directs the protein to the mitochondrion. Residue H101 is the Proton acceptor of the active site. Residues 175 to 198 (WKRGRVDEPESASPPDGSLPDASQ) are disordered. H224 serves as a coordination point for heme b. W240 serves as the catalytic Tryptophan radical intermediate.

It belongs to the peroxidase family. Cytochrome c peroxidase subfamily. Forms a one-to-one complex with cytochrome c. Requires heme b as cofactor.

It localises to the mitochondrion matrix. The protein localises to the mitochondrion intermembrane space. The catalysed reaction is 2 Fe(II)-[cytochrome c] + H2O2 + 2 H(+) = 2 Fe(III)-[cytochrome c] + 2 H2O. Destroys radicals which are normally produced within the cells and which are toxic to biological systems. The polypeptide is Cytochrome c peroxidase, mitochondrial (CCP1) (Yarrowia lipolytica (strain CLIB 122 / E 150) (Yeast)).